The sequence spans 223 residues: Neurotrophic factor BDNF precursor form (223 aa).

The N-terminal stretch at 1 to 5 is a signal peptide; it reads SCMKA. Positions 6–114 are excised as a propeptide; that stretch reads APMKEVSIRG…AANMSMRVRR (109 aa). Residue asparagine 107 is glycosylated (N-linked (GlcNAc...) asparagine). 2 disulfide bridges follow: cysteine 127–cysteine 194 and cysteine 172–cysteine 223.

This sequence belongs to the NGF-beta family.

It is found in the secreted. Its function is as follows. Promotes the survival of neuronal populations that are all located either in the central nervous system or directly connected to it. In Exiliboa placata (Oaxacan dwarf boa), this protein is Neurotrophic factor BDNF precursor form (BDNF).